Here is a 176-residue protein sequence, read N- to C-terminus: Ribosome maturation factor RimM (176 aa).

In terms of domain architecture, PRC barrel spans 96–176 (PEDEFYWRDL…QILVDWDPDF (81 aa)).

The protein belongs to the RimM family. Binds ribosomal protein uS19.

It localises to the cytoplasm. Its function is as follows. An accessory protein needed during the final step in the assembly of 30S ribosomal subunit, possibly for assembly of the head region. Essential for efficient processing of 16S rRNA. May be needed both before and after RbfA during the maturation of 16S rRNA. It has affinity for free ribosomal 30S subunits but not for 70S ribosomes. In Shewanella woodyi (strain ATCC 51908 / MS32), this protein is Ribosome maturation factor RimM.